The sequence spans 89 residues: Small ribosomal subunit protein uS15 (89 aa).

Belongs to the universal ribosomal protein uS15 family. Part of the 30S ribosomal subunit. Forms a bridge to the 50S subunit in the 70S ribosome, contacting the 23S rRNA.

One of the primary rRNA binding proteins, it binds directly to 16S rRNA where it helps nucleate assembly of the platform of the 30S subunit by binding and bridging several RNA helices of the 16S rRNA. Its function is as follows. Forms an intersubunit bridge (bridge B4) with the 23S rRNA of the 50S subunit in the ribosome. This chain is Small ribosomal subunit protein uS15, found in Acinetobacter baylyi (strain ATCC 33305 / BD413 / ADP1).